The following is a 155-amino-acid chain: Large ribosomal subunit protein uL16m (155 aa).

Belongs to the universal ribosomal protein uL16 family.

The protein localises to the mitochondrion. The sequence is that of Large ribosomal subunit protein uL16m (RPL16) from Petunia hybrida (Petunia).